The primary structure comprises 100 residues: Small ribosomal subunit protein uS14 (100 aa).

This sequence belongs to the universal ribosomal protein uS14 family. Part of the 30S ribosomal subunit. Contacts proteins S3 and S10.

In terms of biological role, binds 16S rRNA, required for the assembly of 30S particles and may also be responsible for determining the conformation of the 16S rRNA at the A site. This is Small ribosomal subunit protein uS14 from Prochlorococcus marinus (strain MIT 9313).